The following is a 426-amino-acid chain: Probable indole-3-pyruvate monooxygenase YUCCA8 (426 aa).

29-34 lines the FAD pocket; sequence GAGPSG. 199–204 serves as a coordination point for NADP(+); the sequence is GCGNSG.

The protein belongs to the FMO family. Requires FAD as cofactor. In terms of tissue distribution, expressed in root tips and in hydathodes. Expressed in root vasculature and quiescent center, but not in the meristematic zone of the root tip.

It catalyses the reaction indole-3-pyruvate + NADPH + O2 + H(+) = (indol-3-yl)acetate + CO2 + NADP(+) + H2O. It participates in plant hormone metabolism; auxin biosynthesis. Its function is as follows. Involved in auxin biosynthesis. Belongs to the set of redundant YUCCA genes probably responsible for auxin biosynthesis in roots. This is Probable indole-3-pyruvate monooxygenase YUCCA8 (YUC8) from Arabidopsis thaliana (Mouse-ear cress).